The sequence spans 121 residues: UPF0102 protein Hhal_2103 (121 aa).

Positions 1–20 are disordered; it reads MMAPQTTRNDPRQRGQEAEE. The span at 9-20 shows a compositional bias: basic and acidic residues; sequence NDPRQRGQEAEE.

The protein belongs to the UPF0102 family.

The sequence is that of UPF0102 protein Hhal_2103 from Halorhodospira halophila (strain DSM 244 / SL1) (Ectothiorhodospira halophila (strain DSM 244 / SL1)).